The primary structure comprises 174 residues: U-stichotoxin-Hau2a (174 aa).

Residues 1–18 (MKPIFIVALLFSTCLVNA) form the signal peptide. Residues 19–33 (KPSINDADIKREPEP) constitute a propeptide that is removed on maturation. Proline 39 is subject to Hydroxyproline. Disulfide bonds link cysteine 40-cysteine 51 and cysteine 43-cysteine 58. Positions 61-67 (RKREPEP) are excised as a propeptide. At proline 73 the chain carries Hydroxyproline. Disulfide bonds link cysteine 74–cysteine 85 and cysteine 77–cysteine 92. A propeptide spanning residues 95–101 (RKREPEP) is cleaved from the precursor. Position 107 is a hydroxyproline (proline 107). Cystine bridges form between cysteine 108-cysteine 119 and cysteine 111-cysteine 126. Positions 129–135 (RKREPEP) are excised as a propeptide. Residue proline 141 is modified to Hydroxyproline. Cystine bridges form between cysteine 142-cysteine 153 and cysteine 145-cysteine 160. A propeptide spanning residues 163–174 (RKREPENQDLWS) is cleaved from the precursor.

It belongs to the sea anemone BBH family.

Its subcellular location is the secreted. It localises to the nematocyst. Functionally, neurotoxin that paralyzes freshwater crabs at high concentration. The polypeptide is U-stichotoxin-Hau2a (Heteractis aurora (Banded sea anemone)).